Consider the following 427-residue polypeptide: Serine--tRNA ligase (427 aa).

230-232 (TSE) contributes to the L-serine binding site. ATP-binding positions include 260–262 (RRE) and V276. L-serine is bound at residue E283. 347 to 350 (ELTS) is a binding site for ATP. T387 provides a ligand contact to L-serine.

Belongs to the class-II aminoacyl-tRNA synthetase family. Type-1 seryl-tRNA synthetase subfamily. In terms of assembly, homodimer. The tRNA molecule binds across the dimer.

It is found in the cytoplasm. It catalyses the reaction tRNA(Ser) + L-serine + ATP = L-seryl-tRNA(Ser) + AMP + diphosphate + H(+). The catalysed reaction is tRNA(Sec) + L-serine + ATP = L-seryl-tRNA(Sec) + AMP + diphosphate + H(+). It participates in aminoacyl-tRNA biosynthesis; selenocysteinyl-tRNA(Sec) biosynthesis; L-seryl-tRNA(Sec) from L-serine and tRNA(Sec): step 1/1. Its function is as follows. Catalyzes the attachment of serine to tRNA(Ser). Is also able to aminoacylate tRNA(Sec) with serine, to form the misacylated tRNA L-seryl-tRNA(Sec), which will be further converted into selenocysteinyl-tRNA(Sec). The sequence is that of Serine--tRNA ligase from Micrococcus luteus (strain ATCC 4698 / DSM 20030 / JCM 1464 / CCM 169 / CCUG 5858 / IAM 1056 / NBRC 3333 / NCIMB 9278 / NCTC 2665 / VKM Ac-2230) (Micrococcus lysodeikticus).